A 182-amino-acid chain; its full sequence is Allergen Bla g 4 (182 aa).

The N-terminal stretch at 1 to 12 (AVLALCATDTLA) is a signal peptide. N-linked (GlcNAc...) asparagine glycosylation occurs at Asn-72.

Belongs to the calycin superfamily. Triabin family.

It is found in the secreted. Probable ligand-binding protein. The sequence is that of Allergen Bla g 4 from Blattella germanica (German cockroach).